The chain runs to 435 residues: tRNA-2-methylthio-N(6)-dimethylallyladenosine synthase (435 aa).

Residues 5–120 enclose the MTTase N-terminal domain; it reads KKLFIETLGC…ISEVLHKERA (116 aa). [4Fe-4S] cluster is bound by residues Cys-14, Cys-51, Cys-83, Cys-152, Cys-156, and Cys-159. The 235-residue stretch at 138–372 folds into the Radical SAM core domain; it reads RTSPYKAYIN…NLAVNILDEK (235 aa). The TRAM domain maps to 374–435; sequence KTHLGKIYRV…RTILSGEIVG (62 aa).

The protein belongs to the methylthiotransferase family. MiaB subfamily. In terms of assembly, monomer. Requires [4Fe-4S] cluster as cofactor.

Its subcellular location is the cytoplasm. It carries out the reaction N(6)-dimethylallyladenosine(37) in tRNA + (sulfur carrier)-SH + AH2 + 2 S-adenosyl-L-methionine = 2-methylsulfanyl-N(6)-dimethylallyladenosine(37) in tRNA + (sulfur carrier)-H + 5'-deoxyadenosine + L-methionine + A + S-adenosyl-L-homocysteine + 2 H(+). In terms of biological role, catalyzes the methylthiolation of N6-(dimethylallyl)adenosine (i(6)A), leading to the formation of 2-methylthio-N6-(dimethylallyl)adenosine (ms(2)i(6)A) at position 37 in tRNAs that read codons beginning with uridine. The protein is tRNA-2-methylthio-N(6)-dimethylallyladenosine synthase of Sulfurimonas denitrificans (strain ATCC 33889 / DSM 1251) (Thiomicrospira denitrificans (strain ATCC 33889 / DSM 1251)).